Consider the following 126-residue polypeptide: MDVLGRHIIAELWECNLEKLNNIDFIRDTFVEAAVLAGAEVREVVFHPFAPYGISGVVIISESHLTIHSFPEHGYASIDVYTCGDKVDPNIAVKHIADALESSVGQFREIPRGMGPVNAKPIQKIK.

Ser63 acts as the Schiff-base intermediate with substrate; via pyruvic acid in catalysis. Pyruvic acid (Ser); by autocatalysis is present on Ser63. His68 functions as the Proton acceptor; for processing activity in the catalytic mechanism. Residue Cys83 is the Proton donor; for catalytic activity of the active site.

The protein belongs to the prokaryotic AdoMetDC family. Type 1 subfamily. Heterotetramer of two alpha and two beta chains arranged as a dimer of alpha/beta heterodimers. Requires pyruvate as cofactor. Is synthesized initially as an inactive proenzyme. Formation of the active enzyme involves a self-maturation process in which the active site pyruvoyl group is generated from an internal serine residue via an autocatalytic post-translational modification. Two non-identical subunits are generated from the proenzyme in this reaction, and the pyruvate is formed at the N-terminus of the alpha chain, which is derived from the carboxyl end of the proenzyme. The post-translation cleavage follows an unusual pathway, termed non-hydrolytic serinolysis, in which the side chain hydroxyl group of the serine supplies its oxygen atom to form the C-terminus of the beta chain, while the remainder of the serine residue undergoes an oxidative deamination to produce ammonia and the pyruvoyl group blocking the N-terminus of the alpha chain.

The catalysed reaction is S-adenosyl-L-methionine + H(+) = S-adenosyl 3-(methylsulfanyl)propylamine + CO2. It participates in amine and polyamine biosynthesis; S-adenosylmethioninamine biosynthesis; S-adenosylmethioninamine from S-adenosyl-L-methionine: step 1/1. In terms of biological role, catalyzes the decarboxylation of S-adenosylmethionine to S-adenosylmethioninamine (dcAdoMet), the propylamine donor required for the synthesis of the polyamines spermine and spermidine from the diamine putrescine. This chain is S-adenosylmethionine decarboxylase proenzyme, found in Oceanobacillus iheyensis (strain DSM 14371 / CIP 107618 / JCM 11309 / KCTC 3954 / HTE831).